The chain runs to 496 residues: Probable malate:quinone oxidoreductase (496 aa).

The protein belongs to the MQO family. Requires FAD as cofactor.

The enzyme catalyses (S)-malate + a quinone = a quinol + oxaloacetate. It participates in carbohydrate metabolism; tricarboxylic acid cycle; oxaloacetate from (S)-malate (quinone route): step 1/1. In Prochlorococcus marinus (strain NATL2A), this protein is Probable malate:quinone oxidoreductase.